The primary structure comprises 307 residues: Ethylmalonyl-CoA decarboxylase (307 aa).

N-acetylalanine is present on A2. N6-acetyllysine; alternate is present on K217. K217 is modified (N6-succinyllysine; alternate). N6-succinyllysine is present on K301.

Belongs to the enoyl-CoA hydratase/isomerase family.

Its subcellular location is the cytoplasm. The protein localises to the cytosol. The catalysed reaction is (2S)-ethylmalonyl-CoA + H(+) = butanoyl-CoA + CO2. It carries out the reaction (S)-methylmalonyl-CoA + H(+) = propanoyl-CoA + CO2. The enzyme catalyses (2R)-ethylmalonyl-CoA + H(+) = butanoyl-CoA + CO2. Decarboxylates ethylmalonyl-CoA, a potentially toxic metabolite, to form butyryl-CoA, suggesting it might be involved in metabolite proofreading. Acts preferentially on (S)-ethylmalonyl-CoA but also has some activity on the (R)-isomer. Also has methylmalonyl-CoA decarboxylase activity at lower level. The sequence is that of Ethylmalonyl-CoA decarboxylase (ECHDC1) from Homo sapiens (Human).